A 293-amino-acid chain; its full sequence is Elongation factor Ts (293 aa).

An involved in Mg(2+) ion dislocation from EF-Tu region spans residues 80–83 (TDFV).

This sequence belongs to the EF-Ts family.

It localises to the cytoplasm. Its function is as follows. Associates with the EF-Tu.GDP complex and induces the exchange of GDP to GTP. It remains bound to the aminoacyl-tRNA.EF-Tu.GTP complex up to the GTP hydrolysis stage on the ribosome. This chain is Elongation factor Ts, found in Staphylococcus aureus (strain USA300).